We begin with the raw amino-acid sequence, 48 residues long: Large ribosomal subunit protein bL33A (48 aa).

Belongs to the bacterial ribosomal protein bL33 family.

This is Large ribosomal subunit protein bL33A from Exiguobacterium sibiricum (strain DSM 17290 / CCUG 55495 / CIP 109462 / JCM 13490 / 255-15).